A 323-amino-acid chain; its full sequence is tRNA dimethylallyltransferase (323 aa).

Position 12 to 19 (12 to 19) interacts with ATP; it reads GPTAAGKT. Residue 14-19 participates in substrate binding; sequence TAAGKT. 2 interaction with substrate tRNA regions span residues 37–40 and 161–165; these read DSAL and QRLIR.

This sequence belongs to the IPP transferase family. As to quaternary structure, monomer. It depends on Mg(2+) as a cofactor.

The catalysed reaction is adenosine(37) in tRNA + dimethylallyl diphosphate = N(6)-dimethylallyladenosine(37) in tRNA + diphosphate. In terms of biological role, catalyzes the transfer of a dimethylallyl group onto the adenine at position 37 in tRNAs that read codons beginning with uridine, leading to the formation of N6-(dimethylallyl)adenosine (i(6)A). The protein is tRNA dimethylallyltransferase of Pseudomonas syringae pv. syringae (strain B728a).